The primary structure comprises 292 residues: Homoserine kinase (292 aa).

ATP is bound at residue 84–94 (PFSRGLGSSSA).

This sequence belongs to the GHMP kinase family. Homoserine kinase subfamily.

It is found in the cytoplasm. The enzyme catalyses L-homoserine + ATP = O-phospho-L-homoserine + ADP + H(+). It functions in the pathway amino-acid biosynthesis; L-threonine biosynthesis; L-threonine from L-aspartate: step 4/5. Functionally, catalyzes the ATP-dependent phosphorylation of L-homoserine to L-homoserine phosphate. This is Homoserine kinase from Campylobacter hominis (strain ATCC BAA-381 / DSM 21671 / CCUG 45161 / LMG 19568 / NCTC 13146 / CH001A).